We begin with the raw amino-acid sequence, 344 residues long: Arginine N-succinyltransferase (344 aa).

Residue Leu125 participates in succinyl-CoA binding. Catalysis depends on His229, which acts as the Proton donor.

It belongs to the arginine N-succinyltransferase family.

The enzyme catalyses succinyl-CoA + L-arginine = N(2)-succinyl-L-arginine + CoA + H(+). The protein operates within amino-acid degradation; L-arginine degradation via AST pathway; L-glutamate and succinate from L-arginine: step 1/5. Catalyzes the transfer of succinyl-CoA to arginine to produce N(2)-succinylarginine. The protein is Arginine N-succinyltransferase of Salmonella agona (strain SL483).